Here is a 150-residue protein sequence, read N- to C-terminus: Aspartate carbamoyltransferase regulatory chain (150 aa).

Residues Cys-105, Cys-110, Cys-133, and Cys-136 each contribute to the Zn(2+) site.

Belongs to the PyrI family. In terms of assembly, contains catalytic and regulatory chains. Zn(2+) is required as a cofactor.

Involved in allosteric regulation of aspartate carbamoyltransferase. In Thermococcus sibiricus (strain DSM 12597 / MM 739), this protein is Aspartate carbamoyltransferase regulatory chain.